The chain runs to 162 residues: Protein FAM162B (162 aa).

A disordered region spans residues glutamate 26–proline 69. Residues valine 107–serine 127 form a helical membrane-spanning segment.

Belongs to the UPF0389 family.

Its subcellular location is the membrane. In Homo sapiens (Human), this protein is Protein FAM162B (FAM162B).